Consider the following 365-residue polypeptide: Protein AC54 (365 aa).

In terms of assembly, interacts with C42 and VP80. Interacts with protein 38K.

The protein localises to the virion. Its function is as follows. Structural protein that participates in nucleocapsid assembly. Plays an essential role in the proper localization of the major capsid protein VP39, and the minor capsid protein 38K into the capsid assembly site. In Lepidoptera (butterflies and moths), this protein is Protein AC54 (AC54).